The chain runs to 194 residues: Orotate phosphoribosyltransferase (194 aa).

5-phospho-alpha-D-ribose 1-diphosphate is bound by residues Arg102, Lys103, Lys106, His108, and 129 to 137 (EDVVTTGGS). The orotate site is built by Thr133 and Arg161.

This sequence belongs to the purine/pyrimidine phosphoribosyltransferase family. PyrE subfamily. As to quaternary structure, homodimer. It depends on Mg(2+) as a cofactor.

The enzyme catalyses orotidine 5'-phosphate + diphosphate = orotate + 5-phospho-alpha-D-ribose 1-diphosphate. It functions in the pathway pyrimidine metabolism; UMP biosynthesis via de novo pathway; UMP from orotate: step 1/2. In terms of biological role, catalyzes the transfer of a ribosyl phosphate group from 5-phosphoribose 1-diphosphate to orotate, leading to the formation of orotidine monophosphate (OMP). The sequence is that of Orotate phosphoribosyltransferase from Synechococcus sp. (strain CC9902).